The chain runs to 264 residues: 3-methyl-2-oxobutanoate hydroxymethyltransferase (264 aa).

2 residues coordinate Mg(2+): D45 and D84. 3-methyl-2-oxobutanoate is bound by residues 45-46, D84, and K112; that span reads DS. E114 contributes to the Mg(2+) binding site. E181 (proton acceptor) is an active-site residue.

This sequence belongs to the PanB family. In terms of assembly, homodecamer; pentamer of dimers. Requires Mg(2+) as cofactor.

The protein resides in the cytoplasm. It carries out the reaction 3-methyl-2-oxobutanoate + (6R)-5,10-methylene-5,6,7,8-tetrahydrofolate + H2O = 2-dehydropantoate + (6S)-5,6,7,8-tetrahydrofolate. It participates in cofactor biosynthesis; (R)-pantothenate biosynthesis; (R)-pantoate from 3-methyl-2-oxobutanoate: step 1/2. Its function is as follows. Catalyzes the reversible reaction in which hydroxymethyl group from 5,10-methylenetetrahydrofolate is transferred onto alpha-ketoisovalerate to form ketopantoate. The polypeptide is 3-methyl-2-oxobutanoate hydroxymethyltransferase (Escherichia coli O157:H7).